The chain runs to 381 residues: Chaperone protein DnaJ (381 aa).

One can recognise a J domain in the interval 5–73 (DYYEVLGVGK…EKKAAYDQYG (69 aa)). The CR-type zinc finger occupies 141–219 (GHEAQIRVPH…CHGQGKLKSQ (79 aa)). Cysteine 154, cysteine 157, cysteine 171, cysteine 174, cysteine 193, cysteine 196, cysteine 207, and cysteine 210 together coordinate Zn(2+). 4 CXXCXGXG motif repeats span residues 154–161 (CDHCHGNG), 171–178 (CPTCHGAG), 193–200 (CPKCHGSG), and 207–214 (CTKCHGQG). The segment at 357-381 (SVHEGGSRHSPQEQSWLDKVKSFFS) is disordered.

Belongs to the DnaJ family. As to quaternary structure, homodimer. Zn(2+) serves as cofactor.

Its subcellular location is the cytoplasm. In terms of biological role, participates actively in the response to hyperosmotic and heat shock by preventing the aggregation of stress-denatured proteins and by disaggregating proteins, also in an autonomous, DnaK-independent fashion. Unfolded proteins bind initially to DnaJ; upon interaction with the DnaJ-bound protein, DnaK hydrolyzes its bound ATP, resulting in the formation of a stable complex. GrpE releases ADP from DnaK; ATP binding to DnaK triggers the release of the substrate protein, thus completing the reaction cycle. Several rounds of ATP-dependent interactions between DnaJ, DnaK and GrpE are required for fully efficient folding. Also involved, together with DnaK and GrpE, in the DNA replication of plasmids through activation of initiation proteins. The polypeptide is Chaperone protein DnaJ (Cupriavidus necator (strain ATCC 17699 / DSM 428 / KCTC 22496 / NCIMB 10442 / H16 / Stanier 337) (Ralstonia eutropha)).